The following is a 376-amino-acid chain: tRNA-specific 2-thiouridylase MnmA (376 aa).

ATP-binding positions include 16 to 23 and Leu42; that span reads AMSGGVDS. Cys111 serves as the catalytic Nucleophile. Cysteines 111 and 210 form a disulfide. Residue Gly135 coordinates ATP. Residues 158–160 are interaction with tRNA; it reads KDQ. Catalysis depends on Cys210, which acts as the Cysteine persulfide intermediate.

It belongs to the MnmA/TRMU family.

It is found in the cytoplasm. The catalysed reaction is S-sulfanyl-L-cysteinyl-[protein] + uridine(34) in tRNA + AH2 + ATP = 2-thiouridine(34) in tRNA + L-cysteinyl-[protein] + A + AMP + diphosphate + H(+). Functionally, catalyzes the 2-thiolation of uridine at the wobble position (U34) of tRNA, leading to the formation of s(2)U34. The protein is tRNA-specific 2-thiouridylase MnmA of Streptomyces coelicolor (strain ATCC BAA-471 / A3(2) / M145).